The chain runs to 391 residues: Elongation factor Tu (391 aa).

Residues 10 to 201 (KPHVNIGTIG…AVDEYIPTPA (192 aa)) form the tr-type G domain. The segment at 19–26 (GHVDHGKT) is G1. 19 to 26 (GHVDHGKT) is a binding site for GTP. Position 26 (Thr-26) interacts with Mg(2+). The segment at 55–59 (GITIS) is G2. Residues 76-79 (DCPG) are G3. Residues 76-80 (DCPGH) and 131-134 (NKVD) each bind GTP. The G4 stretch occupies residues 131-134 (NKVD). A G5 region spans residues 169–171 (SAL).

This sequence belongs to the TRAFAC class translation factor GTPase superfamily. Classic translation factor GTPase family. EF-Tu/EF-1A subfamily. As to quaternary structure, monomer.

It is found in the cytoplasm. The catalysed reaction is GTP + H2O = GDP + phosphate + H(+). In terms of biological role, GTP hydrolase that promotes the GTP-dependent binding of aminoacyl-tRNA to the A-site of ribosomes during protein biosynthesis. This chain is Elongation factor Tu, found in Ruegeria pomeroyi (strain ATCC 700808 / DSM 15171 / DSS-3) (Silicibacter pomeroyi).